A 1298-amino-acid polypeptide reads, in one-letter code: Phosphoribosylformylglycinamidine synthase (1298 aa).

The segment at 303–327 (FPGAATGSGGEIRDEGATGRGAKPK) is disordered. ATP-binding positions include 305-316 (GAATGSGGEIRD), 384-386 (TGY), and Ala-676. Mg(2+) contacts are provided by Asp-677, Glu-716, Asn-720, and Asp-884. Ser-886 is an ATP binding site. In terms of domain architecture, Glutamine amidotransferase type-1 spans 1045-1298 (VAVLREQGVN…MFRNARAWVN (254 aa)). Cys-1138 serves as the catalytic Nucleophile. Catalysis depends on residues His-1263 and Glu-1265.

In the N-terminal section; belongs to the FGAMS family. As to quaternary structure, monomer.

The protein localises to the cytoplasm. The enzyme catalyses N(2)-formyl-N(1)-(5-phospho-beta-D-ribosyl)glycinamide + L-glutamine + ATP + H2O = 2-formamido-N(1)-(5-O-phospho-beta-D-ribosyl)acetamidine + L-glutamate + ADP + phosphate + H(+). It functions in the pathway purine metabolism; IMP biosynthesis via de novo pathway; 5-amino-1-(5-phospho-D-ribosyl)imidazole from N(2)-formyl-N(1)-(5-phospho-D-ribosyl)glycinamide: step 1/2. Phosphoribosylformylglycinamidine synthase involved in the purines biosynthetic pathway. Catalyzes the ATP-dependent conversion of formylglycinamide ribonucleotide (FGAR) and glutamine to yield formylglycinamidine ribonucleotide (FGAM) and glutamate. The polypeptide is Phosphoribosylformylglycinamidine synthase (Pseudomonas syringae pv. syringae (strain B728a)).